The primary structure comprises 358 residues: Putative purine permease 12 (358 aa).

10 helical membrane-spanning segments follow: residues 29-49 (WILVFISIFFLISAQAISVLL), 62-82 (WISTLVQTGGFPILYLPLSLL), 100-120 (LVWIYLSLGFAIGLDNFLYSV), 128-148 (STYSILCASQLAFNGVFYYYI), 153-173 (ITCLIFFSVLFLSISAVLVSL), 189-209 (LIGCFCAVFASLIYSLQLSLM), 235-255 (VASCVAVIGLFASGEWMLLSV), 280-299 (LGCVGAVSLIFLVSSLFSNL), 300-316 (ISTLSLIVTPLAAIAVF), and 320-340 (LTEVKMVAMPIAFTGFTFYIY).

It belongs to the purine permeases (TC 2.A.7.14) family.

It is found in the membrane. The chain is Putative purine permease 12 (PUP12) from Arabidopsis thaliana (Mouse-ear cress).